The chain runs to 526 residues: 3',5'-cyclic-nucleotide phosphodiesterase 2 (526 aa).

The region spanning Arg182 to Gln526 is the PDEase domain. The active-site Proton donor is the His265. The a divalent metal cation site is built by His269, His302, Asp303, and Asp400.

Belongs to the cyclic nucleotide phosphodiesterase family. As to quaternary structure, monomer. Requires a divalent metal cation as cofactor.

The catalysed reaction is 3',5'-cyclic AMP + H2O = AMP + H(+). Functionally, controls the level of cAMP in yeast cells, together with the low-affinity cAMP phosphodiesterase (PDE1). This is 3',5'-cyclic-nucleotide phosphodiesterase 2 from Saccharomyces cerevisiae (strain ATCC 204508 / S288c) (Baker's yeast).